The chain runs to 634 residues: DNA-directed RNA polymerase subunit gamma (634 aa).

Positions 74, 76, 89, and 92 each coordinate Zn(2+). 3 residues coordinate Mg(2+): aspartate 471, aspartate 473, and aspartate 475.

Belongs to the RNA polymerase beta' chain family. RpoC1 subfamily. In cyanobacteria the RNAP catalytic core is composed of 2 alpha, 1 beta, 1 beta', 1 gamma and 1 omega subunit. When a sigma factor is associated with the core the holoenzyme is formed, which can initiate transcription. The cofactor is Mg(2+). It depends on Zn(2+) as a cofactor.

The catalysed reaction is RNA(n) + a ribonucleoside 5'-triphosphate = RNA(n+1) + diphosphate. Its function is as follows. DNA-dependent RNA polymerase catalyzes the transcription of DNA into RNA using the four ribonucleoside triphosphates as substrates. In Parasynechococcus marenigrum (strain WH8102), this protein is DNA-directed RNA polymerase subunit gamma.